Consider the following 887-residue polypeptide: Integrator complex subunit 6 (887 aa).

Positions Ile3 to Val227 constitute a VWFA domain. The short motif at Met626–Glu633 is the Inhibitory loop element. Position 804 is a phosphoserine (Ser804).

Belongs to the Integrator subunit 6 family. In terms of assembly, component of the Integrator complex, composed of core subunits INTS1, INTS2, INTS3, INTS4, INTS5, INTS6, INTS7, INTS8, INTS9/RC74, INTS10, INTS11/CPSF3L, INTS12, INTS13, INTS14 and INTS15. The core complex associates with protein phosphatase 2A subunits PPP2CA and PPP2R1A, to form the Integrator-PP2A (INTAC) complex. As to expression, widely expressed. Expressed in heart, brain, placenta, lung, liver, skeletal muscle, kidney and pancreas.

Its subcellular location is the nucleus. It localises to the chromosome. In terms of biological role, component of the integrator complex, a multiprotein complex that terminates RNA polymerase II (Pol II) transcription in the promoter-proximal region of genes. The integrator complex provides a quality checkpoint during transcription elongation by driving premature transcription termination of transcripts that are unfavorably configured for transcriptional elongation: the complex terminates transcription by (1) catalyzing dephosphorylation of the C-terminal domain (CTD) of Pol II subunit POLR2A and SUPT5H/SPT5, (2) degrading the exiting nascent RNA transcript via endonuclease activity and (3) promoting the release of Pol II from bound DNA. The integrator complex is also involved in terminating the synthesis of non-coding Pol II transcripts, such as enhancer RNAs (eRNAs), small nuclear RNAs (snRNAs), telomerase RNAs and long non-coding RNAs (lncRNAs). Within the integrator complex, INTS6 acts as a molecular adapter that promotes assembly of protein phosphatase 2A (PP2A) subunits to the integrator core complex, promoting recruitment of PP2A to transcription pause-release checkpoint. Mediates recruitment of cytoplasmic dynein to the nuclear envelope, probably as component of the integrator complex. May have a tumor suppressor role; an ectopic expression suppressing tumor cell growth. The polypeptide is Integrator complex subunit 6 (Homo sapiens (Human)).